Here is a 321-residue protein sequence, read N- to C-terminus: Fe-S cluster assembly protein DRE2 (321 aa).

The N-terminal SAM-like domain stretch occupies residues 1 to 131 (MERMLLLSPP…KPDFGPENIV (131 aa)). The segment at 132-213 (PLKLGKRKPV…EETLLDGEDM (82 aa)) is linker. [2Fe-2S] cluster is bound by residues C223, C234, C237, and C239. Residues 223–239 (CRPKAGKRRRACKDCTC) are fe-S binding site A. Positions 284, 287, 295, and 298 each coordinate [4Fe-4S] cluster. 2 consecutive short sequence motifs (cx2C motif) follow at residues 284–287 (CGNC) and 295–298 (CDGC). Residues 284 to 298 (CGNCALGDAFRCDGC) are fe-S binding site B.

It belongs to the anamorsin family. Monomer. Interacts with TAH18. Interacts with MIA40. [2Fe-2S] cluster is required as a cofactor. The cofactor is [4Fe-4S] cluster.

Its subcellular location is the cytoplasm. The protein resides in the mitochondrion intermembrane space. Its function is as follows. Component of the cytosolic iron-sulfur (Fe-S) protein assembly (CIA) machinery required for the maturation of extramitochondrial Fe-S proteins. Part of an electron transfer chain functioning in an early step of cytosolic Fe-S biogenesis, facilitating the de novo assembly of a [4Fe-4S] cluster on the scaffold complex CFD1-NBP35. Electrons are transferred to DRE2 from NADPH via the FAD- and FMN-containing protein TAH18. TAH18-DRE2 are also required for the assembly of the diferric tyrosyl radical cofactor of ribonucleotide reductase (RNR), probably by providing electrons for reduction during radical cofactor maturation in the catalytic small subunit RNR2. This is Fe-S cluster assembly protein DRE2 from Coccidioides posadasii (strain C735) (Valley fever fungus).